The sequence spans 636 residues: Epsin-3 (636 aa).

A 1,2-diacyl-sn-glycero-3-phospho-(1D-myo-inositol-4,5-bisphosphate)-binding residues include R8, K11, R25, N30, R63, and H73. Residues 12–144 (NIVHNYSEAE…KDEERLRQER (133 aa)) form the ENTH domain. Positions 153-503 (RMALEGMGIG…TPESFLGPSA (351 aa)) are disordered. A compositionally biased stretch (low complexity) spans 174 to 189 (GSPSSYTSASSSPRYA). S184 and S185 each carry phosphoserine. 2 UIM domains span residues 202–221 (EEEL…AERP) and 229–248 (DEDL…HEKG). Composition is skewed to basic and acidic residues over residues 214–231 (SREE…RDED) and 242–256 (RQEH…KGDD). The residue at position 257 (S257) is a Phosphoserine. The segment covering 270-288 (RQRDREPEREERKEEEKLK) has biased composition (basic and acidic residues). Tandem repeats lie at residues 315–317 (DPW), 338–340 (DPW), 365–367 (EPW), 381–383 (DPW), and 398–400 (DPW). The interval 315–400 (DPWDIPGLRP…KLPSTGADPW (86 aa)) is 5 X 3 AA repeats of [DE]-P-W. The segment covering 426-435 (ESTEPKESRD) has biased composition (basic and acidic residues). Tandem repeats lie at residues 523–525 (NPF) and 536–538 (NPF). The 3 X 3 AA repeats of N-P-F stretch occupies residues 523 to 635 (NPFLTGLGVP…LPPQAGTNPF (113 aa)). Residues 607 to 616 (PPPASLPQPL) are compositionally biased toward pro residues. A disordered region spans residues 607–636 (PPPASLPQPLLPTSGPMGPLPPQAGTNPFL). Copy 3 of the repeat occupies 633-635 (NPF).

This sequence belongs to the epsin family.

It localises to the cytoplasm. Its subcellular location is the cell cortex. The protein resides in the perinuclear region. The protein localises to the cytoplasmic vesicle. It is found in the clathrin-coated vesicle. The polypeptide is Epsin-3 (Epn3) (Mus musculus (Mouse)).